The primary structure comprises 259 residues: Phosphatidylglycerol--prolipoprotein diacylglyceryl transferase (259 aa).

A run of 4 helical transmembrane segments spans residues 9-29, 55-75, 92-112, and 117-137; these read IIFS…VIGI, FITY…VLLY, EGGM…YLFC, and INFL…LFLG. An a 1,2-diacyl-sn-glycero-3-phospho-(1'-sn-glycerol)-binding site is contributed by R138. Helical transmembrane passes span 172 to 192, 201 to 221, and 228 to 248; these read QLYE…YTTF, GLNS…IEIF, and IGFI…MLLL.

This sequence belongs to the Lgt family.

The protein resides in the cell inner membrane. The enzyme catalyses L-cysteinyl-[prolipoprotein] + a 1,2-diacyl-sn-glycero-3-phospho-(1'-sn-glycerol) = an S-1,2-diacyl-sn-glyceryl-L-cysteinyl-[prolipoprotein] + sn-glycerol 1-phosphate + H(+). It participates in protein modification; lipoprotein biosynthesis (diacylglyceryl transfer). Its function is as follows. Catalyzes the transfer of the diacylglyceryl group from phosphatidylglycerol to the sulfhydryl group of the N-terminal cysteine of a prolipoprotein, the first step in the formation of mature lipoproteins. This chain is Phosphatidylglycerol--prolipoprotein diacylglyceryl transferase, found in Rickettsia conorii (strain ATCC VR-613 / Malish 7).